The chain runs to 63 residues: Keratin-associated protein 8-1 (63 aa).

Positions Pro12–Tyr54 are 12 X 2 AA repeats of G-[YCGS].

The protein belongs to the KRTAP type 8 family. In terms of assembly, interacts with hair keratins. In terms of tissue distribution, is essentially restricted to only one vertical half of the hair forming compartment and in beard hairs is absent from the central medulla.

Its function is as follows. In the hair cortex, hair keratin intermediate filaments are embedded in an interfilamentous matrix, consisting of hair keratin-associated proteins (KRTAP), which are essential for the formation of a rigid and resistant hair shaft through their extensive disulfide bond cross-linking with abundant cysteine residues of hair keratins. The matrix proteins include the high-sulfur and high-glycine-tyrosine keratins. In Homo sapiens (Human), this protein is Keratin-associated protein 8-1 (KRTAP8-1).